The sequence spans 289 residues: Pyridoxal kinase PdxY (289 aa).

Residues Ser-9 and 44–45 (TQ) contribute to the substrate site. Residues Asp-112, Val-144, Glu-149, and Lys-182 each contribute to the ATP site. Residue Asp-221 participates in substrate binding.

This sequence belongs to the pyridoxine kinase family. PdxY subfamily. As to quaternary structure, homodimer. Mg(2+) serves as cofactor.

It catalyses the reaction pyridoxal + ATP = pyridoxal 5'-phosphate + ADP + H(+). The protein operates within cofactor metabolism; pyridoxal 5'-phosphate salvage; pyridoxal 5'-phosphate from pyridoxal: step 1/1. Pyridoxal kinase involved in the salvage pathway of pyridoxal 5'-phosphate (PLP). Catalyzes the phosphorylation of pyridoxal to PLP. This Vibrio parahaemolyticus serotype O3:K6 (strain RIMD 2210633) protein is Pyridoxal kinase PdxY.